The following is a 504-amino-acid chain: Maturase K (504 aa).

It belongs to the intron maturase 2 family. MatK subfamily.

It is found in the plastid. The protein resides in the chloroplast. In terms of biological role, usually encoded in the trnK tRNA gene intron. Probably assists in splicing its own and other chloroplast group II introns. The protein is Maturase K of Calyptranthes pallens (Spicewood).